A 676-amino-acid polypeptide reads, in one-letter code: A-type ATP synthase subunit I (676 aa).

The next 8 helical transmembrane spans lie at 341–361, 390–410, 449–469, 490–510, 538–558, 564–584, 590–610, and 617–637; these read VFIAIFFPIFFGMMLGDIGYG, AGVMSIIFGFIYGECFGPFIV, ILLFATIVIGIAKILFGFALG, IIGVLGLAMIIFGFAYNVGVF, LNVYYLAALPLLVVWFILFVM, MGAMGVILAVELLTWFGQIMS, AIGLSSVYIAFVINFIGMKLI, and IPIVGAIVLLIGHVGNLILGI.

This sequence belongs to the V-ATPase 116 kDa subunit family. In terms of assembly, has multiple subunits with at least A(3), B(3), C, D, E, F, H, I and proteolipid K(x).

It localises to the cell membrane. Component of the A-type ATP synthase that produces ATP from ADP in the presence of a proton gradient across the membrane. The protein is A-type ATP synthase subunit I of Archaeoglobus fulgidus (strain ATCC 49558 / DSM 4304 / JCM 9628 / NBRC 100126 / VC-16).